Reading from the N-terminus, the 656-residue chain is Pyoverdine export ATP-binding/permease protein PvdT (656 aa).

The ABC transporter domain occupies 6-245 (IDLRAIRKSY…SANPAALQAV (240 aa)). 43–50 (GASGSGKS) is a binding site for ATP. 4 consecutive transmembrane segments (helical) span residues 284–304 (ALTL…LAVG), 538–558 (IAAI…LMTV), 589–609 (LSVV…AALL), and 619–639 (VPAV…FGFM).

It belongs to the ABC transporter superfamily. Macrolide exporter (TC 3.A.1.122) family. Part of the tripartite efflux system PvdRT-OpmQ, which is composed of an inner membrane component with both ATPase and permease domains, PvdT, a periplasmic membrane fusion protein, PvdR, and an outer membrane component, OpmQ.

The protein resides in the cell inner membrane. Part of the tripartite efflux system PvdRT-OpmQ required for the secretion into the extracellular milieu of the siderophore pyoverdine (PVD), which is involved in iron acquisition. This subunit binds PVD and drives its secretion by hydrolyzing ATP. The system is responsible for export of newly synthesized PVD after the final steps of biosynthesis have taken place in the periplasm. It is also responsible for recycling of PVD after internalization of ferri-PVD into the periplasm by the outer-membrane receptor FpvA and release of iron from PVD, thus making PVD available for new cycles of iron uptake. The sequence is that of Pyoverdine export ATP-binding/permease protein PvdT from Pseudomonas savastanoi pv. phaseolicola (strain 1448A / Race 6) (Pseudomonas syringae pv. phaseolicola (strain 1448A / Race 6)).